We begin with the raw amino-acid sequence, 252 residues long: Carbohydrate deacetylase (252 aa).

Mg(2+) contacts are provided by His59 and His122.

This sequence belongs to the YdjC deacetylase family. Homodimer. Mg(2+) is required as a cofactor.

In terms of biological role, probably catalyzes the deacetylation of acetylated carbohydrates an important step in the degradation of oligosaccharides. The chain is Carbohydrate deacetylase from Vibrio vulnificus (strain YJ016).